The primary structure comprises 194 residues: Probable thymidylate kinase (194 aa).

8–15 is a binding site for ATP; the sequence is GIDGSGKT.

The protein belongs to the thymidylate kinase family.

It catalyses the reaction dTMP + ATP = dTDP + ADP. The protein is Probable thymidylate kinase of Sulfolobus acidocaldarius (strain ATCC 33909 / DSM 639 / JCM 8929 / NBRC 15157 / NCIMB 11770).